Reading from the N-terminus, the 193-residue chain is Potassium-transporting ATPase KdpC subunit (193 aa).

Residues Pro-7–Val-27 traverse the membrane as a helical segment.

Belongs to the KdpC family. In terms of assembly, the system is composed of three essential subunits: KdpA, KdpB and KdpC.

The protein localises to the cell inner membrane. Part of the high-affinity ATP-driven potassium transport (or Kdp) system, which catalyzes the hydrolysis of ATP coupled with the electrogenic transport of potassium into the cytoplasm. This subunit acts as a catalytic chaperone that increases the ATP-binding affinity of the ATP-hydrolyzing subunit KdpB by the formation of a transient KdpB/KdpC/ATP ternary complex. The sequence is that of Potassium-transporting ATPase KdpC subunit from Variovorax paradoxus (strain S110).